A 552-amino-acid chain; its full sequence is Putative transport protein ECA4401 (552 aa).

Transmembrane regions (helical) follow at residues 4-24 (IALTVSMLALVAVLGLWIGNW), 26-46 (IYGVGLGIGGVLFGGIIVGHV), 65-85 (FGLILFVYTIGIQVGPGFFSS), 90-112 (GLRLNAFALLTVFLGSVVTVMLH), and 158-178 (TGYAMAYPLGICGILLVMWLM). 2 RCK C-terminal domains span residues 191–276 (KQFE…VIGN) and 279–361 (ETSL…IVGN). 6 consecutive transmembrane segments (helical) span residues 371–391 (MLPVFIGIGLGVLLGSVPLMV), 393–413 (GFPVALRLGLAGGPLVVALVL), 439–459 (IVLFLSVVGLKSGGDFVDTLL), 464–484 (VWWIGYGALITIVPLLAVGIL), 493–513 (YLTLCGMLAGSMTDPPALAFA), and 530–550 (VYPLAMFLRIMSPQLLAVLFL).

It belongs to the AAE transporter (TC 2.A.81) family. YidE subfamily.

It localises to the cell membrane. This is Putative transport protein ECA4401 from Pectobacterium atrosepticum (strain SCRI 1043 / ATCC BAA-672) (Erwinia carotovora subsp. atroseptica).